A 262-amino-acid chain; its full sequence is Polyamine aminopropyltransferase (262 aa).

The PABS domain maps to 1-249 (MWITQEITPY…DIHRAAFALP (249 aa)). Residue N29 participates in S-methyl-5'-thioadenosine binding. D83 is a spermidine binding site. The Proton acceptor role is filled by D155.

It belongs to the spermidine/spermine synthase family. As to quaternary structure, homodimer or homotetramer.

Its subcellular location is the cytoplasm. It carries out the reaction S-adenosyl 3-(methylsulfanyl)propylamine + putrescine = S-methyl-5'-thioadenosine + spermidine + H(+). Its pathway is amine and polyamine biosynthesis; spermidine biosynthesis; spermidine from putrescine: step 1/1. Its function is as follows. Catalyzes the irreversible transfer of a propylamine group from the amino donor S-adenosylmethioninamine (decarboxy-AdoMet) to putrescine (1,4-diaminobutane) to yield spermidine. The chain is Polyamine aminopropyltransferase from Helicobacter acinonychis (strain Sheeba).